The following is a 400-amino-acid chain: Argininosuccinate synthase (400 aa).

Residues 10–18 and Ala-38 each bind ATP; that span reads AYSGGVDTS. Tyr-89 provides a ligand contact to L-citrulline. Gly-119 serves as a coordination point for ATP. L-aspartate-binding residues include Thr-121, Asn-125, and Asp-126. Asn-125 lines the L-citrulline pocket. L-citrulline is bound by residues Arg-129, Ser-177, Ser-186, Glu-262, and Tyr-274.

The protein belongs to the argininosuccinate synthase family. Type 1 subfamily. Homotetramer.

Its subcellular location is the cytoplasm. The enzyme catalyses L-citrulline + L-aspartate + ATP = 2-(N(omega)-L-arginino)succinate + AMP + diphosphate + H(+). The protein operates within amino-acid biosynthesis; L-arginine biosynthesis; L-arginine from L-ornithine and carbamoyl phosphate: step 2/3. The polypeptide is Argininosuccinate synthase (Nostoc sp. (strain PCC 7120 / SAG 25.82 / UTEX 2576)).